The primary structure comprises 501 residues: Glycerol kinase (501 aa).

Thr12 provides a ligand contact to ADP. Thr12, Thr13, and Ser14 together coordinate ATP. A sn-glycerol 3-phosphate-binding site is contributed by Thr12. Residue Arg16 participates in ADP binding. Residues Arg82, Glu83, Tyr135, and Asp244 each coordinate sn-glycerol 3-phosphate. The glycerol site is built by Arg82, Glu83, Tyr135, Asp244, and Gln245. ADP contacts are provided by Thr266, Gly309, Gly409, and Asn413. ATP contacts are provided by Thr266, Gly309, and Gly409.

This sequence belongs to the FGGY kinase family.

The enzyme catalyses glycerol + ATP = sn-glycerol 3-phosphate + ADP + H(+). The protein operates within polyol metabolism; glycerol degradation via glycerol kinase pathway; sn-glycerol 3-phosphate from glycerol: step 1/1. Its activity is regulated as follows. Inhibited by fructose 1,6-bisphosphate (FBP). Key enzyme in the regulation of glycerol uptake and metabolism. Catalyzes the phosphorylation of glycerol to yield sn-glycerol 3-phosphate. In Coxiella burnetii (strain RSA 331 / Henzerling II), this protein is Glycerol kinase.